We begin with the raw amino-acid sequence, 119 residues long: MKIFSVALSMLRPVRFLIVAFTCALLFLSSTVPAFAISSYQSEPTEATDQLLETQKATDEVARSAPLGLKEVQKKSNEGLNEVQGVADINKQKRPANSQDSSSVEGDIQNFLEKVTGKN.

The segment at 67 to 119 (LGLKEVQKKSNEGLNEVQGVADINKQKRPANSQDSSSVEGDIQNFLEKVTGKN) is disordered. The span at 95 to 104 (PANSQDSSSV) shows a compositional bias: polar residues.

This is an uncharacterized protein from Anabaena variabilis.